A 588-amino-acid chain; its full sequence is Aspartate--tRNA ligase (588 aa).

Glutamate 177 contributes to the L-aspartate binding site. The tract at residues 201 to 204 (QLFK) is aspartate. Arginine 223 is an L-aspartate binding site. ATP is bound by residues 223–225 (RDE) and glutamine 232. Histidine 451 provides a ligand contact to L-aspartate. Glutamate 485 contacts ATP. Arginine 492 serves as a coordination point for L-aspartate. Residue 537–540 (GLDR) coordinates ATP.

This sequence belongs to the class-II aminoacyl-tRNA synthetase family. Type 1 subfamily. As to quaternary structure, homodimer.

It is found in the cytoplasm. The catalysed reaction is tRNA(Asp) + L-aspartate + ATP = L-aspartyl-tRNA(Asp) + AMP + diphosphate. Catalyzes the attachment of L-aspartate to tRNA(Asp) in a two-step reaction: L-aspartate is first activated by ATP to form Asp-AMP and then transferred to the acceptor end of tRNA(Asp). This Staphylococcus aureus (strain Newman) protein is Aspartate--tRNA ligase.